We begin with the raw amino-acid sequence, 496 residues long: MTFNSFEGSRTVVPADTNKDEEFVEEFNRLKTFANFPSSSPVSASTLARAGFLYTGEGDTVQCFSCHAAVDRWQYGDSAVGRHRRISPNCRFINGFYFENGATQSTSPGIQNGQYKSENCVGNRNHFALDRPSETHADYLLRTGQVVDISDTIYPRNPAMCSEEARLKTFQNWPDYAHLSPRELASAGLYYTGIDDQVQCFCCGGKLKNWEPCDRAWSEHRRHFPNCFFVLGRNVNVRSESGVSSDRNFPNSTNSPRNPAMAEYDARIVTFGTWLYSVNKEQLARAGFYALGEGDKVKCFHCGGGLTDWKPSEDPWEQHAKWYPGCKYLLDEKGQEYINNIHLTHSLGESVVRTAEKTPSVTKKIDDTIFQNPMVQEAIRMGFNFKDIKKTMEEKLQTSGSNYLSLEVLIADLVSAQKDNSQDESSQTSLQKDISTEEQLRRLQEEKLCKICMDRNIAIVFVPCGHLVTCKQCAEAVDKCPMCCTVITFKQKIFMS.

BIR repeat units lie at residues E26–I93, E163–V230, and Y264–L329. 3 residues coordinate Zn(2+): C299, C302, and H319. A Glycyl lysine isopeptide (Lys-Gly) (interchain with G-Cter in ubiquitin) cross-link involves residue K321. C326 lines the Zn(2+) pocket. A Glycyl lysine isopeptide (Lys-Gly) (interchain with G-Cter in ubiquitin) cross-link involves residue K327. Residue C449 is modified to S-nitrosocysteine. The RING-type zinc-finger motif lies at C449–C484.

It belongs to the IAP family. As to quaternary structure, monomer, and homodimer. Interacts (via BIR3 domain) with DIABLO/SMAC; the interaction inhibits apoptotic suppressor activity. Interacts with HTRA2/PRSS25; the interaction inhibits apoptotic suppressor activity. Interacts with TAB1/MAP3K7IP1 and AIFM1. Interaction with DIABLO/SMAC hinders binding of TAB1/MAP3K7IP1 and AIFM1. Interacts with TCF25 and COMMD1. Interacts (via BIR3 domain) with SEPTIN4. Interacts with RIP1, RIP2, RIP3, RIP4, CCS and USP19. Interacts (via BIR 2 domain and BIR 3 domain) with HAX1 (via C-terminus) and this interaction blocks ubiquitination of XIAP/BIRC4. Interacts with the monomeric form of BIRC5/survivin. Interacts with TLE3 and TCF7L2/TCF4. Interacts (via BIR 3 and RING domains) with PDCL3. Post-translationally, S-Nitrosylation down-regulates its E3 ubiquitin-protein ligase activity. Autoubiquitinated. Ubiquitinated by TRIM32; leading to proteasomal degradation.

The protein resides in the cytoplasm. It is found in the nucleus. It catalyses the reaction S-ubiquitinyl-[E2 ubiquitin-conjugating enzyme]-L-cysteine + [acceptor protein]-L-lysine = [E2 ubiquitin-conjugating enzyme]-L-cysteine + N(6)-ubiquitinyl-[acceptor protein]-L-lysine.. Functionally, multi-functional protein which regulates not only caspases and apoptosis, but also modulates inflammatory signaling and immunity, copper homeostasis, mitogenic kinase signaling, cell proliferation, as well as cell invasion and metastasis. Acts as a direct caspase inhibitor. Directly bind to the active site pocket of CASP3 and CASP7 and obstructs substrate entry. Inactivates CASP9 by keeping it in a monomeric, inactive state. Acts as an E3 ubiquitin-protein ligase regulating NF-kappa-B signaling and the target proteins for its E3 ubiquitin-protein ligase activity include: RIPK1, RIPK2, MAP3K2/MEKK2, DIABLO/SMAC, AIFM1, CCS, PTEN and BIRC5/survivin. Acts as an important regulator of innate immunity by mediating 'Lys-63'-linked polyubiquitination of RIPK2 downstream of NOD1 and NOD2, thereby transforming RIPK2 into a scaffolding protein for downstream effectors, ultimately leading to activation of the NF-kappa-B and MAP kinases signaling. 'Lys-63'-linked polyubiquitination of RIPK2 also promotes recruitment of the LUBAC complex to RIPK2. Regulates the BMP signaling pathway and the SMAD and MAP3K7/TAK1 dependent pathways leading to NF-kappa-B and JNK activation. Ubiquitination of CCS leads to enhancement of its chaperone activity toward its physiologic target, SOD1, rather than proteasomal degradation. Ubiquitination of MAP3K2/MEKK2 and AIFM1 does not lead to proteasomal degradation. Plays a role in copper homeostasis by ubiquitinating COMMD1 and promoting its proteasomal degradation. Can also function as E3 ubiquitin-protein ligase of the NEDD8 conjugation pathway, targeting effector caspases for neddylation and inactivation. Ubiquitinates and therefore mediates the proteasomal degradation of BCL2 in response to apoptosis. Protects cells from spontaneous formation of the ripoptosome, a large multi-protein complex that has the capability to kill cancer cells in a caspase-dependent and caspase-independent manner. Suppresses ripoptosome formation by ubiquitinating RIPK1 and CASP8. Acts as a positive regulator of Wnt signaling and ubiquitinates TLE1, TLE2, TLE3, TLE4 and AES. Ubiquitination of TLE3 results in inhibition of its interaction with TCF7L2/TCF4 thereby allowing efficient recruitment and binding of the transcriptional coactivator beta-catenin to TCF7L2/TCF4 that is required to initiate a Wnt-specific transcriptional program. In Rattus norvegicus (Rat), this protein is E3 ubiquitin-protein ligase XIAP (Xiap).